We begin with the raw amino-acid sequence, 365 residues long: Coxsackievirus and adenovirus receptor homolog (365 aa).

The first 19 residues, Met1–Ser19, serve as a signal peptide directing secretion. Ig-like C2-type domains follow at residues Leu20–Thr136 and Pro141–Asp228. Residues Leu20–Thr238 are Extracellular-facing. 3 disulfides stabilise this stretch: Cys41–Cys120, Cys146–Cys223, and Cys162–Cys212. The N-linked (GlcNAc...) asparagine glycan is linked to Asn106. The helical transmembrane segment at Ile239–Cys259 threads the bilayer. S-palmitoyl cysteine attachment occurs at residues Cys259 and Cys260. Over Cys260–Val365 the chain is Cytoplasmic. Positions Tyr269–Pro282 are enriched in basic and acidic residues. Residues Tyr269–Lys315 form a disordered region. Over residues Ser286–Lys315 the composition is skewed to polar residues. 6 positions are modified to phosphoserine: Ser297, Ser304, Ser306, Ser323, Ser332, and Ser363. A PDZ-binding motif is present at residues Lys360–Val365.

Monomer. May form homodimer. Interacts with LNX, MAGI1, DLG4, PRKCABP, TJP1 and CTNNB1. Interacts with MPDZ; recruits MPDZ to intercellular contact sites. Interacts with JAML (homodimeric form). N-glycosylated. Post-translationally, palmitoylated on Cys-259 and/or Cys-260; required for proper localization to the plasma membrane. Expressed in heart, brain, spleen, lung, liver, muscle, kidney, testis, spleen and skeletal muscle.

Its subcellular location is the cell membrane. The protein localises to the basolateral cell membrane. It is found in the cell junction. The protein resides in the tight junction. It localises to the adherens junction. Functionally, component of the epithelial apical junction complex that may function as a homophilic cell adhesion molecule and is essential for tight junction integrity. Also involved in transepithelial migration of leukocytes through adhesive interactions with JAML a transmembrane protein of the plasma membrane of leukocytes. The interaction between both receptors also mediates the activation of gamma-delta T-cells, a subpopulation of T-cells residing in epithelia and involved in tissue homeostasis and repair. Upon epithelial CXADR-binding, JAML induces downstream cell signaling events in gamma-delta T-cells through PI3-kinase and MAP kinases. It results in proliferation and production of cytokines and growth factors by T-cells that in turn stimulate epithelial tissues repair. This Rattus norvegicus (Rat) protein is Coxsackievirus and adenovirus receptor homolog (Cxadr).